The following is a 94-amino-acid chain: Scorpine (94 aa).

Positions 1–19 are cleaved as a signal peptide; it reads MNSKLTALIFLGLIAIAYC. Residues 55–94 enclose the BetaSPN-type CS-alpha/beta domain; that stretch reads EFQCMANMDMLGNCEKHCQTSGEKGYCHGTKCKCGTPLSY. Intrachain disulfides connect C58-C81, C68-C86, and C72-C88.

Belongs to the long chain scorpion toxin family. Class 3 subfamily. As to expression, expressed by the venom gland.

The protein resides in the secreted. The protein localises to the target cell membrane. In terms of biological role, this full-length protein shows antibacterial activity against B.subtilis and K.pneumoniae. Also shows a potent inhibitory effect on the ookinete (ED(50) 0.7 uM) and gamete (ED(50) 10 uM) stages of Plasmodium berghei development. In addition, induces cell membrane disruption, leakage currents and cell death on HEK293 cell line (tested at 25 uM). In Pandinus imperator (Emperor scorpion), this protein is Scorpine.